The sequence spans 263 residues: SPRY domain-containing SOCS box protein 2 (263 aa).

Over residues 1–16 the composition is skewed to polar residues; the sequence is MGQTALAGGSSSTPTP. A disordered region spans residues 1-48; the sequence is MGQTALAGGSSSTPTPQALYPDLSCPEGLEELLSAPPPDLGAQRRHGW. A B30.2/SPRY domain is found at 26-221; the sequence is PEGLEELLSA…VRIRYLGERR (196 aa). The region spanning 222 to 263 is the SOCS box domain; sequence AEPHSLLHLSRLCVRHNLGDTRLGQVSALPLPPAMKRYLLYQ.

This sequence belongs to the SPSB family. In terms of assembly, component of the probable ECS(SPSB2) E3 ubiquitin-protein ligase complex which contains CUL5, RNF7/RBX2, Elongin BC complex and SPSB2. Interacts with CUL5, RNF7, ELOB and ELOC. Interacts with MET. Interacts (via B30.2/SPRY domain) with PAWR; this interaction occurs in association with the Elongin BC complex. Interacts with NOS2. As to quaternary structure, (Microbial infection) Interacts (via C-terminus) with HCV envelope glycoprotein E1. Interacts (via C-terminus) with HCV non-structural protein 5A; this interaction targets NS5A for ubiquitination and degradation.

It is found in the cytoplasm. Its subcellular location is the cytosol. Its pathway is protein modification; protein ubiquitination. Its function is as follows. Substrate recognition component of a SCF-like ECS (Elongin BC-CUL2/5-SOCS-box protein) E3 ubiquitin-protein ligase complex which mediates the ubiquitination and subsequent proteasomal degradation of target proteins. Negatively regulates nitric oxide (NO) production and limits cellular toxicity in activated macrophages by mediating the ubiquitination and proteasomal degradation of NOS2. Acts as a bridge which links NOS2 with the ECS E3 ubiquitin ligase complex components ELOC and CUL5. The protein is SPRY domain-containing SOCS box protein 2 (SPSB2) of Homo sapiens (Human).